Here is a 376-residue protein sequence, read N- to C-terminus: Protein FAM199X (376 aa).

A compositionally biased stretch (basic and acidic residues) spans 237–253; the sequence is YIKEHSPRQRSTRESWK. The tract at residues 237 to 350 is disordered; sequence YIKEHSPRQR…QRQARKERLS (114 aa). Positions 255–300 are enriched in low complexity; sequence TSYSTASTSGVSGASVSSSSASMVSTASSTGSSGGNSASNSSANMS. A compositionally biased stretch (basic residues) spans 318 to 337; it reads DSKKRSKQRKLQQKALRKRQ. Residues 320–349 adopt a coiled-coil conformation; the sequence is KKRSKQRKLQQKALRKRQLKEQRQARKERL. Residues 338 to 349 show a composition bias toward basic and acidic residues; that stretch reads LKEQRQARKERL.

Belongs to the FAM199 family.

The polypeptide is Protein FAM199X (fam199x) (Xenopus tropicalis (Western clawed frog)).